A 117-amino-acid chain; its full sequence is Large ribosomal subunit protein bL20 (117 aa).

Belongs to the bacterial ribosomal protein bL20 family.

In terms of biological role, binds directly to 23S ribosomal RNA and is necessary for the in vitro assembly process of the 50S ribosomal subunit. It is not involved in the protein synthesizing functions of that subunit. This Crocosphaera subtropica (strain ATCC 51142 / BH68) (Cyanothece sp. (strain ATCC 51142)) protein is Large ribosomal subunit protein bL20.